Reading from the N-terminus, the 226-residue chain is Small ribosomal subunit protein uS2c (226 aa).

Belongs to the universal ribosomal protein uS2 family.

The protein resides in the plastid. The protein localises to the chloroplast. The polypeptide is Small ribosomal subunit protein uS2c (rps2) (Ostreococcus tauri).